A 6061-amino-acid polypeptide reads, in one-letter code: MFESLVADIIAKYIGEYIKNLSSEQLKINVFSGNVVLKNLEIKGEALQSFKLPLHVQKGIIGTLTLKIPWTNLKSSPVIFDIDCISLYAIPQTGFDYNEEEEKKNQLELKRKKLEKFELIRSFKEGSGADQKTTKQDTFMTSVMTKILNNIQVKIQSFHLRYEEIKGGKVYSLGISFGSLSAFPTDSNWGQSLNENNQQQQQHHQSSLFKYIELTNFSIYLDSEDKKESISKMVEKNDNQLFSNTLKSMIGTTQDTYSKHQYILKPITVRLKIELNRNLDMNIDIPRMKVYCQFDQVSFVIEENQYQSILKLLTTIGNYAQEIKYLKYRPKQRPKQDPKAWWKYVGDVVRESIREKIQQRSWTFIQKRRQNRKEYIKLFKKLQNVDWMEPINEQELKQLSEMEEVHLSFEDIIYFRSLARRELAMETAIADSKKGEFYSSLNRANTSVKQGFFGSWSSWATGNKDSTSSSSSSSSTLPRMNIQLTKEQQAEIEKSMEYDEITLGATIEMPPHYVVNVFEVQIDAVIFTIIGNRGPSENPLIKSYLNNINFKLQQREQGLKLELDLESFNVSDNNNKNNNSLFPYVVTSNPKYKRHQENKENKENQENQENENKNEINNNNNNKKKDNNLFHIIFESKPINSNYDYALSLMLKSLEIIINKQQIERLVEFATPKENVNLFSLSSAALEEFILLKEMTIFQLREVVNHHKTIDLFIDAKAPILIIPEHMYINNNNNNNNENSDNNSSIDTNLIILDLGNFLMQSDISKKPRKSNYSIETPFILNEQITKLIDSQTENELDDNTVDIKNSDNNNNNISDNINNNNNINNKNNINNNKEIEEDDLKISDLYDHYRASLSSIKVLLATHSQDWYLPDENNSKGYQLIEEMSINLHIQSCIEPNELSLSMFKVSGILPQVKVNLSDSSYLKLYHIAKTLGRIHSKTTNTTITAYNHIMDMYSNTQDTFVQQVDAKTTEIKLSDQYKQVLSKRKIFDARFKLEKVLVNIISNQSKLLQLRIGDLQVSLKKKTYDYNGNLLLGSLEVEDCQETCERFNCLITSNSRLLPIIQNNNNNNNNNNNNNNNNNNESCLQLNNNINSSSSLISIHTEMVDRESPHYKLVDTLVDFSFGELNFNYNPKSMGKIICFLDYCFEETFKIQEKFIDQLGNGSTLSNLFHLQSSTPTTPLLESTSQQPLTNPLSKSTLVNNNNNNSNNRVVYNNNNNNIIKAKASIYSLSISLNEEGRELGRFSINQFAIEECTISGRSLDVSGYLESISIDSFLDHPTEGFKILTPKNPGVSMANFKYSTYDNSSSGGGGGGSIINKNKQSLSSSSLPQVEGHQSTQFDKEIQLYLRSIRLTVLVDFILKTKHLIELPFKTVKYDSLYKYQQQQQQQQEEEQQQKEEEQHGGEFDLQNVSSSSPQVKVIDIIGSDQQPIGFKPLKINYKVFLESPQIILSSSDDIHSNHDRIIAELGSVDIKTTILKTNHLIKDSSSSSSSSNSGDCGNEKEIQVQWESIEANLYDMNIRTFKNGQYHQVLHNLSIFNRIDTVLCDGDGKYISFAKLPNQKKINVSIKEIKIEFMDLEHSLILSLTKDVINRITSSLGNNSSNNKLVKSKSSSLSSSTKLLPQLNNDNNNNNNNTNNGTLSSSTSTLFVNTDKEHLTTSINVGIDKFQLILKLDQEKQQQQQQKDHDNDENIIINNDFVTIQLDKISVEMESCKRNDVKTLIKVDDFILLDDRLSDNLRFNKIVEKKKNDNGIGKDEPLINIEFINFKDNNDWESSAIIEFREARVVLSLGLILGIKDFFLLPFVTTLPNEQQQLLLNGNSNQIEIPILSNVLQDLKSILIESTVNNNNNNNNNGDGSSGSKIKKSSKLKLELIAHSPQILLPVSNHSNKLVALDINGDVKLTNSFSPTQIKSFIDSNFYDEFDVESMFITLNGLTFNIYEITTATTTTTTTNNNYSDIKFLSSISKESFDIKVDYSSWDSIYTNTIEMLTCGKQPTIVDVDIFNTFSMRVNEEQYQFFCDMIAHLLRSMDDCPKLKLKKRNPYMLDVLLDQISLLKSTNSTTTTTTISNSLLELKVLEIFGMKVNCKFDKVLIELLSNDGNNNDFSTLILENVLLSIDMATENRPKKMLIEGTVDQLLVYDKRDSDKNSNGRLVLERYSNNNPMMEFSQLMYQSNSPYFPKGQLYSSLLNFNLNHLKAIALPSFSLRVWDWVILTITSVFNTYTIDKYNPINNNNNNNNDDDDIIINNNINNNNSNNINRMKMIVNIPLPIIVLIDESPSLSSLSKQHCNHGKVFVEIKPKSIQISNEFITKVSLGILNSLGNQDNYQDVMNIYLNEFEMNLLTHNGIAESNILKNGNLLVSMENFIQEHQDQNYQTIELTPTSKFTIKTFTSENNDNGILSFKFDQTQYNHFYKCINSVLKRQYEMDSKCNQIYLKPNHKLKPIDMITIINLDCLELLLLSDDDNDGGDGLMDSSVDNVQSEIRIFNLSLENIINSRDETMQVVGLIGNLKVIDSVNQIVIIEPINSNVDRFFTMFKYKTYSRSLKQRQKHLQQLLEDPSLQWDVEFEFNMKSVQFNLSLPNINVPLSIQPFLLSILEKYPIETKSKVQSTLDELSIAEQPPKMKIDINLLYSKVLISPSGKSFTSILTNSSTNISGYDYMVVSFDEVSMKHQPNQFIKLDDLGTIIMDLESINYKVSSLSVEIVLVNKKPYFFLTDIDINASQRTIRNHLEIVNKLHWDGQTNQNNQKNRNPFKFYDQSGASNNNNDNDNDEYDEDQEEISEIYKDQELISKSKISIHSNASQIDLHSNHFQFLWTLYQSIGDIKLNKDQDDDDEDNQEKQNKEKKSNIIGGDKEYLLNFIEFQLKDVKINLINQFNNPILNISLSHLETYLRQIENGSIKLDGSIHSLKILDQRRESTLNSKYKYLLQNYGVDGNSSHNSSGGLNNSFDLNNSGGGNNNNNNSSTKSNILKFSFKPWIYKEDIDDPLFSRNNSSNSINSIENVSITTTTPPPPPSTLPKEFKDKWDQHLIISISNSQITPIFDLFTEIQTSFLPSDLLNKHKENEQDKGGKKSSRIKIDLTMESNQFILPMNFEISNYYLRNEIRKMTISNDYQIIKYFDSSDHHHHQKESSIDSNLMFLEITGFSIDSIMSVLIDSNLPRVNRILRDSNININTRIIDWSSSSSSSKPIKIPSIDTIIDIEHMDFLFCNEEYRFMYDTFNNTLKRYYDFKFLPLPPYKEIDYSFNELISIENQVKCTIQSITMNMLNRQKPNTLATSNNHNHHNSNGTIKPIGQIFLKKLSIDMITCKQNMKLNGTINSMFIRSIKTKENKQSLYLDILKPKYNFNENDIEIENKLNRNSNSDSDNEENHNNNQNNQNNIDDDDGDGDDDDDDDDSIIKFEFISYSEPTSIKGDKSPIKTLWDTQYSVEIGSINLVSKIATLLKIKDFIMEPMVTPFSSAPSNKPSIRDSKDYRSKMYQRLTMKPFTLEIPQSETSTEMVSIEFGTITMSNIYRLFHNNNITINKQIEVLLVDISQFTMYTQRDILSTMVSNSPQMKLEVERLLTLEDRSLQDFKTRAKITNFELIFSADDYLFLYTIFTGNWMFNDEVDSSSHRTPPNPPSLPSWNGVRFVYSPLEHSEQIKVSENQFSSPKGFINLVENRILQSFTLSMDTFNFHMNPIVDPLAILAMNNVILDYNLYRDGIMKTSINLKDVLLLDERNNTDCVFKEILTRKQLNNQNPKTPPHIIIDFLMDPTHNRQFTSIQLDHPMLFVSPNSILPILDFFTSLQQQKEKELQESQQKLQQKLQQKQQHQQQHQQQQQQQQQQQQQQQQQQQQQQQQQQQQQQQQQPIINGDYGGIDSNNRNKKLPPHIRFYLKVTKPKLLLVEDETQQNTNALVMKMPIEFHFSKTSDLNQTMELHASKCQLFRTTPFSDSNNGATSTPITNSFAFTCIFIQFNENDQQTIQIRFQPLNVCLSYKEILMINRLINNLSLTNYQEQLKQQQQQEKEKEIEKERKRKSLLKNNNNISINDNDDDDDDDDNDNDENNNENYEFNFKNNNNEEFYDDFDELTDTTTTSSQRLNEQDKEEIRIQKSFRELEKKKRERKENSKSKSLVAPDRPDESMNLMHKTRVHVEFLGRVSFTLLDESVTMKDIPFVQLNIGEFNSDYWGWEEYSFLSCDMYLKVEVFNQKHMAFDSLVEQFQLNVQVLQSDDPKLKISVKSNSPCNINISQPFIQALANFYQNILKTNASNSSNNNNNNNNNGLSASTSNNLNNTMNDSNNNYNGRNASSNELITFENVDPEEMLFNSISQSISNPNLTTTTTTTTTTTTTTTTSTTINNNNNNNINQFQITTPSSSVINSPNISGINVGSNRSTKNSINHKRNPSLNNNNNNNNNNNNNNNNNNNNNNNNNNNNNNNSNDNQVNFSTSPGWKKPINSGYLHQFDCYNSLTNNIINSKTRDMRSSVDLTMLTRSGASHQRSSHQRSHSRANSNTFNMEMLRSPPVLSSSPTGTSSIPNVLSSSSLNAQTLFTTEGNNQFWIVNLTGKSIEYYVEELNFVQSYSVNDSGSGINNNNNNNNIYNIINLNNSTSSPSSSSNKVNNNYNNMDDEEDKKISKKSLSSSTDKEIHLLRDKEKQALELNSVLFKTRDFRAHGSLNAHVAIRLIDQDSGPSQWIHGVSINQIGDNFYFPPFGNKANLVVCEVGWDEKNESKIATLRSPVLIKNSSNTPIDIQLIHTINNNNNNNNNDVNNNNTNNNNNNNNNNNNNKSNENSQDQPPSIKTQEFGPIRIDENFYIPIDFWNYNCSISIRPHGKDFKFDSIETLELCESSSWPDSHIFTSTKDLINENNAGGSSHYSSNGSNGSFSSISQQQQQKKTENFYLGTMKQSGIRCDRTGLVSTTLIVTPPIIFENVLLCDIEVRIMSHSKRSKVNDTFLKNLVNNGKPATTLSPGKQMPWYSNHGNDVGMTLSLKGLGKDQYFHLPSYIHNSPLATKGKDNNKDNSNNNNNNNNNNNDGIEVGSGLIGGGIDSNSFQHVSFTQEIQFVCTPEYTNTNYTLILKIDHRFEGGCHIASIYCTNAIQNHTMIPFLLRPSNMKLVNALTLETNGDPLMISHDKFYCYHPSAPKIPSKEFDIILGKEDIIEIQFDASKDQMRFQFKAIVSTGFNIFFRTRIVDIYPRFVLVNKLPISLSYTQVNKDLAIMAKDSQLLGPESSIPFHWFNGKEEQQLSISIGQGTSDSSWKWSGGMRIDQIGVNYIKLQHQHDDLIEQSIKVEVRDTSESTMVYFYSNDPQNLPFHIKNETKTIISYQQKHPNSKKYTLKPNEDRYFTWDFPSGERKLTVHYHNDGGINIGNLNNSLNNINNNNNNLNNDNNKNKNNNDKNKNNDKNNKNNNDKNNNDNNNNNNNNNNENQNIGQDTSPIITQDINLNKIKVFKPVKLLKEEIFPIVESSNGTTRDLLFTTKHRVTKELDTLEFAFDISFENLGFSFIDDVPQELIYVAFKDFNFWTSQSNLTETTWLIIDDIQIDNQQPDTDYPVLLWCDKKKESQALPFLEYSAVKMKKKNLKYYDLIALYLNEMYIQLDDKTLLDLNNFYQKIPIHKFNGTIYVDPTSSPSSPQQQQPQTEQPGIIPENFYIKWLIFAEIKIYLTFGISRDGILSNYNKMPALRLVIPSLGKSLGQLENAPLNINQLGVKNIFTTMNNLTQLLSSHYTKQMKRQIHVILGSSNIFGSPLVFFNNISTGMTEAIEDPIMGSIQLMKRILYAAANSSSKLFGTISSGFATWSLDETYLRRRDAEEKVKAKHIAHGFYLGSKGFAMGIIDGVFGIVEHPVRGAMQEGLLGFFKGCGKGVLGIAVKPVTGVFDFASKTSEGIRNNTNIHPERFRLRTPRFINPREPIKEYSVDESEGNFLLKKNSDDINKSEGNPLSSKMEYKFHVVLPDCTLLLTSHSLICLSKKGIYRWSFPLSEISKLVNIVAKCKLNIHLKNYRSFGTFSQLRKKISIHCPNDSILFQLYSKISSCFNRSNRLELEENVADDFGDNSIAMVSRYN.

One can recognise a Chorein N-terminal domain in the interval 2 to 115 (FESLVADIIA…QLELKRKKLE (114 aa)). Disordered regions lie at residues 590-623 (PKYKRHQENKENKENQENQENENKNEINNNNNNK), 803-828 (DIKNSDNNNNNISDNINNNNNINNKN), 1386-1414 (QQQQQQEEEQQQKEEEQHGGEFDLQNVSS), 1604-1644 (SSNN…GTLS), 2747-2784 (QTNQNNQKNRNPFKFYDQSGASNNNNDNDNDEYDEDQE), 2950-2972 (GLNNSFDLNNSGGGNNNNNNSST), 3364-3401 (LNRNSNSDSDNEENHNNNQNNQNNIDDDDGDGDDDDDD), 3855-3876 (QQQQPIINGDYGGIDSNNRNKK), 4011-4068 (QQQQ…FKNN), 4107-4132 (ELEKKKRERKENSKSKSLVAPDRPDE), 4262-4297 (NSSNNNNNNNNNGLSASTSNNLNNTMNDSNNNYNGR), 4321-4442 (SQSI…TSPG), 4601-4631 (TSSPSSSSNKVNNNYNNMDDEEDKKISKKSL), 4753-4797 (NNNN…TQEF), 4861-4882 (NAGGSSHYSSNGSNGSFSSISQ), 5003-5030 (LATKGKDNNKDNSNNNNNNNNNNNDGIE), and 5372-5429 (NINN…IGQD). A compositionally biased stretch (basic and acidic residues) spans 595 to 614 (HQENKENKENQENQENENKN). Residues 1395 to 1406 (QQQKEEEQHGGE) are compositionally biased toward basic and acidic residues. Residues 2747-2756 (QTNQNNQKNR) are compositionally biased toward polar residues. Residues 2774–2784 (NDNDEYDEDQE) show a composition bias toward acidic residues. The segment covering 3388–3401 (IDDDDGDGDDDDDD) has biased composition (acidic residues). Residues 4015 to 4024 (QEKEKEIEKE) are compositionally biased toward basic and acidic residues. Low complexity predominate over residues 4031–4040 (LKNNNNISIN). The segment covering 4041-4057 (DNDDDDDDDDNDNDENN) has biased composition (acidic residues). The span at 4058–4068 (NENYEFNFKNN) shows a compositional bias: low complexity. A compositionally biased stretch (basic and acidic residues) spans 4107-4120 (ELEKKKRERKENSK). Low complexity-rich tracts occupy residues 4330–4383 (TTTT…VGSN) and 4399–4429 (NNNNNNNNNNNNNNNNNNNNNNNNNNNNNNN). Polar residues predominate over residues 4430-4441 (SNDNQVNFSTSP). Low complexity-rich tracts occupy residues 4601–4617 (TSSPSSSSNKVNNNYNN) and 4753–4784 (NNNNNNNDVNNNNTNNNNNNNNNNNNNKSNEN). Polar residues predominate over residues 4785–4794 (SQDQPPSIKT). 2 stretches are compositionally biased toward low complexity: residues 5013 to 5030 (DNSNNNNNNNNNNNDGIE) and 5372 to 5384 (NINNNNNNLNNDN). A compositionally biased stretch (basic and acidic residues) spans 5385 to 5409 (NKNKNNNDKNKNNDKNNKNNNDKNN). A compositionally biased stretch (low complexity) spans 5410–5421 (NDNNNNNNNNNN).

Belongs to the VPS13 family.

It is found in the membrane. Functionally, mediates the transfer of lipids between membranes at organelle contact sites. The sequence is that of Intermembrane lipid transfer protein vps13B (vps13B) from Dictyostelium discoideum (Social amoeba).